The following is a 346-amino-acid chain: SUMO-activating enzyme subunit 1 (346 aa).

Met-1 carries the post-translational modification N-acetylmethionine. Residue Val-2 is modified to N-acetylvaline; in SUMO-activating enzyme subunit 1, N-terminally processed. A Phosphoserine modification is found at Ser-12. Lys-198 bears the N6-acetyllysine mark.

The protein belongs to the ubiquitin-activating E1 family. In terms of assembly, heterodimer of SAE1 and UBA2/SAE2. The heterodimer corresponds to the two domains that are encoded on a single polypeptide chain in ubiquitin-activating enzyme E1. Interacts with UBE2I.

It is found in the nucleus. Its pathway is protein modification; protein sumoylation. The heterodimer acts as an E1 ligase for SUMO1, SUMO2, SUMO3, and probably SUMO4. It mediates ATP-dependent activation of SUMO proteins followed by formation of a thioester bond between a SUMO protein and a conserved active site cysteine residue on UBA2/SAE2. The chain is SUMO-activating enzyme subunit 1 (SAE1) from Bos taurus (Bovine).